A 328-amino-acid polypeptide reads, in one-letter code: V-set and immunoglobulin domain-containing protein 2 (328 aa).

A signal peptide spans 1 to 24 (MAWPLVGAFLCGHLLGFVCLSGLA). Positions 25–138 (VEVTVPTEPL…DFYTNGLGLI (114 aa)) constitute an Ig-like V-type domain. Over 25–244 (VEVTVPTEPL…VTDSSEGRVA (220 aa)) the chain is Extracellular. The cysteines at positions 46 and 122 are disulfide-linked. Asn139, Asn207, and Asn232 each carry an N-linked (GlcNAc...) asparagine glycan. One can recognise an Ig-like C2-type domain in the interval 145-234 (PPSHPLCSQS…GSASCELNLS (90 aa)). Cys167 and Cys218 are disulfide-bonded. The helical transmembrane segment at 245–265 (GTLIGVLLGVLLLSVAAFCLI) threads the bilayer. Over 266 to 328 (RFQKERKKEP…TTKSKLSMVV (63 aa)) the chain is Cytoplasmic.

In terms of tissue distribution, expressed in the stomach, colon and prostate.

The protein localises to the membrane. The polypeptide is V-set and immunoglobulin domain-containing protein 2 (Vsig2) (Mus musculus (Mouse)).